Reading from the N-terminus, the 582-residue chain is Leucine-rich repeat transmembrane neuronal protein 3 (582 aa).

The signal sequence occupies residues methionine 1–alanine 30. Residues glutamate 31–alanine 61 enclose the LRRNT domain. At glutamate 31–lysine 420 the chain is on the extracellular side. LRR repeat units follow at residues cysteine 63–glycine 83, glutamine 86–glycine 107, arginine 110–proline 131, asparagine 134–glycine 155, lysine 158–aspartate 179, asparagine 182–glycine 203, arginine 206–proline 226, serine 230–threonine 251, serine 254–glutamine 275, and asparagine 279–serine 300. Asparagine 126 is a glycosylation site (N-linked (GlcNAc...) asparagine). Residues asparagine 312–lysine 363 enclose the LRRCT domain. The N-linked (GlcNAc...) asparagine glycan is linked to asparagine 357. Residues lysine 378–aspartate 410 are disordered. Residues isoleucine 421–valine 441 form a helical membrane-spanning segment. Topologically, residues serine 442–alanine 582 are cytoplasmic.

The protein belongs to the LRRTM family. In terms of tissue distribution, expressed in neuronal tissues.

The protein resides in the cell membrane. It is found in the postsynaptic cell membrane. May play a role in the development and maintenance of the vertebrate nervous system. Exhibits a limited synaptogenic activity in vitro, restricted to excitatory presynaptic differentiation. The chain is Leucine-rich repeat transmembrane neuronal protein 3 (Lrrtm3) from Mus musculus (Mouse).